The primary structure comprises 435 residues: Xylose isomerase (435 aa).

Active-site residues include histidine 99 and aspartate 102. Mg(2+)-binding residues include glutamate 230, glutamate 266, histidine 269, aspartate 294, aspartate 305, aspartate 307, and aspartate 337.

The protein belongs to the xylose isomerase family. As to quaternary structure, homotetramer. The cofactor is Mg(2+).

The protein resides in the cytoplasm. It catalyses the reaction alpha-D-xylose = alpha-D-xylulofuranose. The polypeptide is Xylose isomerase (Enterococcus faecalis (strain ATCC 700802 / V583)).